The chain runs to 561 residues: Inositol phosphate phosphatase SopB (561 aa).

The active site involves C460. Residues 460–466 carry the CX5R motif motif; it reads CKSGKDR.

Belongs to the phosphatase IpgD/SopB family.

The protein localises to the secreted. Its function is as follows. Converts phosphatidylinositol 3,4,5-trisphosphate (PtdIns 3,4,5-P3) to PtdIns 3-P and prevents the transition of PtdIns 3-P to PtdIns 3,5-P2. It is one of the known effectors injected by Salmonella into the host cell and is required for invasion and for an efficient generation and maintenance of Salmonella-containing vacuole (SVC). Alteration of the phosphoinositide composition of the plasma membrane causes membrane ruffling and actin cytoskeleton rearrangements. The persistence of PtdIns 3-P diverts the SCV from the endocytic pathway resulting in enlarged vesicles, which are essential to create a favorable environment where Salmonella can replicate and avoid immune defenses of the host cell. In Salmonella typhimurium (strain LT2 / SGSC1412 / ATCC 700720), this protein is Inositol phosphate phosphatase SopB (sopB).